Consider the following 287-residue polypeptide: tRNA pseudouridine synthase B (287 aa).

Catalysis depends on Asp38, which acts as the Nucleophile.

Belongs to the pseudouridine synthase TruB family. Type 1 subfamily.

It carries out the reaction uridine(55) in tRNA = pseudouridine(55) in tRNA. In terms of biological role, responsible for synthesis of pseudouridine from uracil-55 in the psi GC loop of transfer RNAs. This is tRNA pseudouridine synthase B from Aquifex aeolicus (strain VF5).